A 396-amino-acid polypeptide reads, in one-letter code: Enoyl-[acyl-carrier-protein] reductase [NADH] (396 aa).

NAD(+)-binding positions include 47–52 (GASTGF), 73–74 (FE), 110–111 (DA), and 138–139 (LA). Tyrosine 224 lines the substrate pocket. The active-site Proton donor is the tyrosine 234. NAD(+)-binding positions include lysine 243 and 272-274 (LVT).

This sequence belongs to the TER reductase family. Monomer.

The enzyme catalyses a 2,3-saturated acyl-[ACP] + NAD(+) = a (2E)-enoyl-[ACP] + NADH + H(+). It functions in the pathway lipid metabolism; fatty acid biosynthesis. Involved in the final reduction of the elongation cycle of fatty acid synthesis (FAS II). Catalyzes the reduction of a carbon-carbon double bond in an enoyl moiety that is covalently linked to an acyl carrier protein (ACP). In Flavobacterium psychrophilum (strain ATCC 49511 / DSM 21280 / CIP 103535 / JIP02/86), this protein is Enoyl-[acyl-carrier-protein] reductase [NADH].